The primary structure comprises 279 residues: Universal stress protein MT2087 (279 aa).

Belongs to the universal stress protein A family.

The protein is Universal stress protein MT2087 of Mycobacterium tuberculosis (strain CDC 1551 / Oshkosh).